Reading from the N-terminus, the 1008-residue chain is DNA polymerase catalytic subunit (1008 aa).

This sequence belongs to the DNA polymerase type-B family.

It is found in the host nucleus. It catalyses the reaction DNA(n) + a 2'-deoxyribonucleoside 5'-triphosphate = DNA(n+1) + diphosphate. The protein is DNA polymerase catalytic subunit (9) of Equine herpesvirus 2 (strain 86/87) (EHV-2).